A 509-amino-acid chain; its full sequence is Apurinic-apyrimidinic endonuclease 1 (509 aa).

The signal sequence occupies residues 1-24 (MPRHCCCFVFHFLLYMLLINIVKN). The disordered stretch occupies residues 144 to 188 (EEKDEECDEKTKQDNNKENIKNETIVQKKKIDKNNKTKEKIKTKS). Basic and acidic residues-rich tracts occupy residues 152–164 (EKTK…ENIK) and 175–188 (DKNN…KTKS). Zn(2+) is bound by residues histidine 291, histidine 331, glutamate 367, aspartate 401, histidine 404, histidine 438, aspartate 451, histidine 453, and glutamate 483. Histidine 404 contacts Mn(2+). Residues aspartate 451 and histidine 453 each coordinate Mn(2+).

Belongs to the AP endonuclease 2 family. Zn(2+) serves as cofactor. It depends on Mn(2+) as a cofactor. May be proteolytically cleaved.

Its subcellular location is the mitochondrion. In terms of biological role, plays a role in mitochondrial DNA base excision repair (BER) pathway induced by oxidative stress. Has apurinic/apyrimidinic (AP) endonuclease activity towards double-stranded DNA (dsDNA) with a preference for C as opposite base. Has 3'-phosphatase activity; removes 3'-phosphate from blunt-end, recessed, and gapped DNA templates and thus, removes 3'-blocks for DNA polymerase activity during BER. Lacks 3'-5' exonuclease activity and does not cleave damaged bases by nucleotide incision repair (NIR). In Plasmodium berghei (strain Anka), this protein is Apurinic-apyrimidinic endonuclease 1.